The primary structure comprises 449 residues: Cyclin-B1-5 (449 aa).

Disordered stretches follow at residues 1 to 37 (MATR…AGRP) and 98 to 147 (PARK…GGSA). Low complexity-rich tracts occupy residues 8–37 (AAAA…AGRP) and 136–147 (SEGAGSSSGGSA).

This sequence belongs to the cyclin family. Cyclin AB subfamily.

The polypeptide is Cyclin-B1-5 (CYCB1-5) (Oryza sativa subsp. japonica (Rice)).